Reading from the N-terminus, the 38-residue chain is Photosystem II reaction center protein L (38 aa).

The helical transmembrane segment at serine 17–phenylalanine 37 threads the bilayer.

Belongs to the PsbL family. PSII is composed of 1 copy each of membrane proteins PsbA, PsbB, PsbC, PsbD, PsbE, PsbF, PsbH, PsbI, PsbJ, PsbK, PsbL, PsbM, PsbT, PsbX, PsbY, PsbZ, Psb30/Ycf12, at least 3 peripheral proteins of the oxygen-evolving complex and a large number of cofactors. It forms dimeric complexes.

It localises to the plastid. The protein resides in the chloroplast thylakoid membrane. Functionally, one of the components of the core complex of photosystem II (PSII). PSII is a light-driven water:plastoquinone oxidoreductase that uses light energy to abstract electrons from H(2)O, generating O(2) and a proton gradient subsequently used for ATP formation. It consists of a core antenna complex that captures photons, and an electron transfer chain that converts photonic excitation into a charge separation. This subunit is found at the monomer-monomer interface and is required for correct PSII assembly and/or dimerization. The polypeptide is Photosystem II reaction center protein L (Tetradesmus obliquus (Green alga)).